Consider the following 328-residue polypeptide: Cytochrome f (328 aa).

The first 44 residues, Met1–Ala44, serve as a signal peptide directing secretion. Residues Tyr45, Cys66, Cys69, and His70 each coordinate heme. A helical membrane pass occupies residues Ile294 to Lys314.

Belongs to the cytochrome f family. As to quaternary structure, the 4 large subunits of the cytochrome b6-f complex are cytochrome b6, subunit IV (17 kDa polypeptide, PetD), cytochrome f and the Rieske protein, while the 4 small subunits are PetG, PetL, PetM and PetN. The complex functions as a dimer. Heme serves as cofactor.

It is found in the cellular thylakoid membrane. Its function is as follows. Component of the cytochrome b6-f complex, which mediates electron transfer between photosystem II (PSII) and photosystem I (PSI), cyclic electron flow around PSI, and state transitions. In Microcystis aeruginosa (strain NIES-843 / IAM M-2473), this protein is Cytochrome f.